The primary structure comprises 197 residues: Probable nicotinate-nucleotide adenylyltransferase (197 aa).

The protein belongs to the NadD family.

The catalysed reaction is nicotinate beta-D-ribonucleotide + ATP + H(+) = deamido-NAD(+) + diphosphate. It functions in the pathway cofactor biosynthesis; NAD(+) biosynthesis; deamido-NAD(+) from nicotinate D-ribonucleotide: step 1/1. In terms of biological role, catalyzes the reversible adenylation of nicotinate mononucleotide (NaMN) to nicotinic acid adenine dinucleotide (NaAD). This is Probable nicotinate-nucleotide adenylyltransferase from Leptospira borgpetersenii serovar Hardjo-bovis (strain JB197).